The following is a 552-amino-acid chain: Serine/threonine-protein kinase RIO2 (552 aa).

The Protein kinase domain maps to V97–F272. An ATP-binding site is contributed by K123. D228 acts as the Proton acceptor in catalysis. Phosphoserine occurs at positions 332, 335, 337, 350, 362, 380, 382, 385, and 390. The Nuclear export signal signature appears at A399–V408. Phosphoserine is present on residues S412, S417, and S442. Y445 is modified (phosphotyrosine). S548 carries the post-translational modification Phosphoserine.

This sequence belongs to the protein kinase superfamily. RIO-type Ser/Thr kinase family. In terms of assembly, associated with late 40S pre-ribosomal particles. Interacts with PLK1 (via its N-terminus). It depends on Mg(2+) as a cofactor. In terms of processing, autophosphorylated (in vitro). Phosphorylation at Ser-335, Ser-380, Ser-548 by PLK1 affects the timing of the metaphase-anaphase transition.

Its subcellular location is the cytoplasm. It catalyses the reaction L-seryl-[protein] + ATP = O-phospho-L-seryl-[protein] + ADP + H(+). The enzyme catalyses L-threonyl-[protein] + ATP = O-phospho-L-threonyl-[protein] + ADP + H(+). Functionally, serine/threonine-protein kinase involved in the final steps of cytoplasmic maturation of the 40S ribosomal subunit. Involved in export of the 40S pre-ribosome particles (pre-40S) from the nucleus to the cytoplasm. Its kinase activity is required for the release of NOB1, PNO1 and LTV1 from the late pre-40S and the processing of 18S-E pre-rRNA to the mature 18S rRNA. Regulates the timing of the metaphase-anaphase transition during mitotic progression, and its phosphorylation, most likely by PLK1, regulates this function. This is Serine/threonine-protein kinase RIO2 from Homo sapiens (Human).